The primary structure comprises 343 residues: F17c-G fimbrial adhesin (343 aa).

Residues 1 to 22 (MTNFYKVFLAVFILVCCNISHA) form the signal peptide. The tract at residues 23-199 (AVSFIGSTEN…LNPFTLNDTV (177 aa)) is receptor-binding lectin domain. A carbohydrate contacts are provided by residues 65–66 (AN), 110–111 (DT), and 138–141 (STQG). C75 and C132 are joined by a disulfide. Residues 200 to 343 (TSCRLLTPSA…GISTFTFSYQ (144 aa)) are fimbrillin-binding domain. Residues 287–307 (LKFGPDSPVKGNENQWQLSTG) form a disordered region. The span at 298–307 (NENQWQLSTG) shows a compositional bias: polar residues.

It belongs to the fimbrial protein family.

The protein resides in the fimbrium. Essential fimbrial adhesion factor that mediates binding to N-acetylglucosamine-containing receptors in the host intestinal microvilli, leading to colonization of the intestinal tissue, and diarrhea or septicemia. Also confers adhesiveness to laminin and basement membranes. This is F17c-G fimbrial adhesin (f17cG) from Escherichia coli.